Here is an 82-residue protein sequence, read N- to C-terminus: Diphthamide biosynthesis protein 3 (82 aa).

The DPH-type MB domain occupies 3–59; sequence TYDEIEIEDMTFEPENQMFTYPCPCGDRFQIYLDDMFEGEKVAVCPSCSLMIDVVFD. The Fe cation site is built by cysteine 25, cysteine 27, cysteine 47, and cysteine 50. Positions 66–82 are required for interaction with the elongator complex; that stretch reads YYEEAGIHPPEPIAAAA.

Belongs to the DPH3 family. As to quaternary structure, component of the 2-(3-amino-3-carboxypropyl)histidine synthase complex composed of DPH1, DPH2, KTI11/DPH3 and a NADH-dependent reductase, predominantly CBR1. Interacts with DPH1. Interacts with DPH2. Interacts with CBR1. Interacts with elongation factor 2. Interacts with ATS1/KTI13; the interaction is direct. Interacts with the 40S ribosomal protein RPS7A. Interacts with the 40S ribosomal protein RPS19A. Interacts with the elongator complex subunit IKI3/ELP1. Interacts with the elongator complex subunit ELP2. Interacts with the elongator complex subunit ELP3. Interacts with the elongator complex subunit ELP5.

It is found in the cytoplasm. Its subcellular location is the nucleus. The catalysed reaction is [3Fe-4S](1+)-[protein] + Fe(2+)-[Dph3] = [3Fe-4S](0)-[protein] + Fe(3+)-[Dph3]. The enzyme catalyses 2 [3Fe-4S](0)-[protein] + 2 Fe(2+)-[Dph3] + NADH = 2 [4Fe-4S](1+)-[protein] + 2 [Dph3] + NAD(+) + H(+). The protein operates within protein modification; peptidyl-diphthamide biosynthesis. Functionally, required for the first step of diphthamide biosynthesis, a post-translational modification of histidine which occurs in elongation factor 2. DPH1 and DPH2 transfer a 3-amino-3-carboxypropyl (ACP) group from S-adenosyl-L-methionine (SAM) to a histidine residue, the reaction is assisted by a reduction system comprising KTI11/DPH3 and a NADH-dependent reductase, predominantly CBR1. Acts as an electron donor to reduce the Fe-S cluster in DPH1-DPH2 keeping the [4Fe-4S] clusters in the active and reduced state. Restores iron to DPH1-DPH2 iron-sulfur clusters which have degraded from [4Fe-4S] to [3Fe-4S] by donating an iron atom to reform [4Fe-4S] clusters, in a manner dependent on the presence of elongation factor 2 and SAM. Together with ATS1; associates with the elongator complex and is required for tRNA Wobble base modifications mediated by the elongator complex. The elongator complex is required for multiple tRNA modifications, including mcm5U (5-methoxycarbonylmethyl uridine), mcm5s 2U (5-methoxycarbonylmethyl-2-thiouridine), and ncm5U (5-carbamoylmethyl uridine). The sequence is that of Diphthamide biosynthesis protein 3 from Saccharomyces cerevisiae (strain ATCC 204508 / S288c) (Baker's yeast).